The following is a 312-amino-acid chain: Acetaldehyde dehydrogenase 4 (312 aa).

Position 12–15 (12–15) interacts with NAD(+); the sequence is SGNI. Catalysis depends on cysteine 132, which acts as the Acyl-thioester intermediate. Residues 163–171 and asparagine 290 contribute to the NAD(+) site; that span reads SAGPGTRAN.

The protein belongs to the acetaldehyde dehydrogenase family.

It catalyses the reaction acetaldehyde + NAD(+) + CoA = acetyl-CoA + NADH + H(+). The sequence is that of Acetaldehyde dehydrogenase 4 from Azotobacter vinelandii (strain DJ / ATCC BAA-1303).